A 160-amino-acid polypeptide reads, in one-letter code: Endoribonuclease YbeY (160 aa).

H127, H131, and H137 together coordinate Zn(2+).

Belongs to the endoribonuclease YbeY family. The cofactor is Zn(2+).

It is found in the cytoplasm. Its function is as follows. Single strand-specific metallo-endoribonuclease involved in late-stage 70S ribosome quality control and in maturation of the 3' terminus of the 16S rRNA. This Synechococcus sp. (strain RCC307) protein is Endoribonuclease YbeY.